The following is a 273-amino-acid chain: Thiazole synthase (273 aa).

Lysine 113 serves as the catalytic Schiff-base intermediate with DXP. 1-deoxy-D-xylulose 5-phosphate is bound by residues glycine 174, alanine 201–glycine 202, and asparagine 223–threonine 224.

The protein belongs to the ThiG family. Homotetramer. Forms heterodimers with either ThiH or ThiS.

The protein resides in the cytoplasm. It carries out the reaction [ThiS sulfur-carrier protein]-C-terminal-Gly-aminoethanethioate + 2-iminoacetate + 1-deoxy-D-xylulose 5-phosphate = [ThiS sulfur-carrier protein]-C-terminal Gly-Gly + 2-[(2R,5Z)-2-carboxy-4-methylthiazol-5(2H)-ylidene]ethyl phosphate + 2 H2O + H(+). Its pathway is cofactor biosynthesis; thiamine diphosphate biosynthesis. Its function is as follows. Catalyzes the rearrangement of 1-deoxy-D-xylulose 5-phosphate (DXP) to produce the thiazole phosphate moiety of thiamine. Sulfur is provided by the thiocarboxylate moiety of the carrier protein ThiS. In vitro, sulfur can be provided by H(2)S. This chain is Thiazole synthase, found in Salinibacter ruber (strain DSM 13855 / M31).